Here is a 170-residue protein sequence, read N- to C-terminus: MNPMEEVIIDKVVVNIGVGQAGDRLTKAAKVLEMLTGHKATNTLAKKSIRDFNIRKRLPIGVKVTLRKKDAMEFLQKAFYVKDYKITDYSFDKHGNAYFGISDYTDFKGMKYDPDIGIFGMDVAIVFRRRGGYRIERRRIGSKTIPNSIRVRKEEAQDFLQKNFKVTVVR.

The protein belongs to the universal ribosomal protein uL5 family. Part of the 50S ribosomal subunit; contacts the 5S rRNA and probably tRNA. Forms a bridge to the 30S subunit in the 70S ribosome.

Its function is as follows. This is one of the proteins that bind and probably mediate the attachment of the 5S RNA into the large ribosomal subunit, where it forms part of the central protuberance. In the 70S ribosome it contacts protein S13 of the 30S subunit (bridge B1b), connecting the 2 subunits; this bridge is implicated in subunit movement. May contact the P site tRNA; the 5S rRNA and some of its associated proteins might help stabilize positioning of ribosome-bound tRNAs. This chain is Large ribosomal subunit protein uL5, found in Thermoplasma acidophilum (strain ATCC 25905 / DSM 1728 / JCM 9062 / NBRC 15155 / AMRC-C165).